Reading from the N-terminus, the 244-residue chain is EEF1A lysine methyltransferase 2 (244 aa).

A disordered region spans residues 1-27; it reads MNADAEGHSGAVVPAQSPEGSSAADDF. Position 21 is a phosphoserine (Ser-21).

It belongs to the class I-like SAM-binding methyltransferase superfamily. EFM4 family.

It is found in the cytoplasm. Its subcellular location is the nucleus. It catalyses the reaction L-lysyl-[protein] + 3 S-adenosyl-L-methionine = N(6),N(6),N(6)-trimethyl-L-lysyl-[protein] + 3 S-adenosyl-L-homocysteine + 3 H(+). Protein-lysine methyltransferase that selectively catalyzes the trimethylation of EEF1A at 'Lys-318'. The chain is EEF1A lysine methyltransferase 2 from Mus musculus (Mouse).